Here is a 459-residue protein sequence, read N- to C-terminus: Putrescine aminotransferase (459 aa).

Pyridoxal 5'-phosphate is bound by residues 150–151 and glutamine 274; that span reads GT. Residue lysine 300 is modified to N6-(pyridoxal phosphate)lysine. Threonine 332 contacts pyridoxal 5'-phosphate.

This sequence belongs to the class-III pyridoxal-phosphate-dependent aminotransferase family. Putrescine aminotransferase subfamily. Pyridoxal 5'-phosphate serves as cofactor.

The catalysed reaction is an alkane-alpha,omega-diamine + 2-oxoglutarate = an omega-aminoaldehyde + L-glutamate. It catalyses the reaction putrescine + 2-oxoglutarate = 1-pyrroline + L-glutamate + H2O. It carries out the reaction cadaverine + 2-oxoglutarate = 5-aminopentanal + L-glutamate. Its pathway is amine and polyamine degradation; putrescine degradation; 4-aminobutanal from putrescine (transaminase route): step 1/1. Functionally, catalyzes the aminotransferase reaction from putrescine to 2-oxoglutarate, leading to glutamate and 4-aminobutanal, which spontaneously cyclizes to form 1-pyrroline. This is the first step in one of two pathways for putrescine degradation, where putrescine is converted into 4-aminobutanoate (gamma-aminobutyrate or GABA) via 4-aminobutanal. Also functions as a cadaverine transaminase in a a L-lysine degradation pathway to succinate that proceeds via cadaverine, glutarate and L-2-hydroxyglutarate. This Salmonella agona (strain SL483) protein is Putrescine aminotransferase.